A 101-amino-acid chain; its full sequence is Small ribosomal subunit protein uS14 (101 aa).

A disordered region spans residues 1–26 (MAKVSSIQKNKSRQKKSQSLHNKRSE). Positions 10–22 (NKSRQKKSQSLHN) are enriched in basic residues.

The protein belongs to the universal ribosomal protein uS14 family. Part of the 30S ribosomal subunit. Contacts proteins S3 and S10.

Its function is as follows. Binds 16S rRNA, required for the assembly of 30S particles and may also be responsible for determining the conformation of the 16S rRNA at the A site. In Rickettsia prowazekii (strain Madrid E), this protein is Small ribosomal subunit protein uS14.